A 435-amino-acid polypeptide reads, in one-letter code: Prenyltransferase nanD (435 aa).

Glu-101 lines the substrate pocket. Dimethylallyl diphosphate-binding residues include Arg-114, Lys-202, and Tyr-204. Tyr-206 contributes to the substrate binding site. The dimethylallyl diphosphate site is built by Lys-280, Tyr-282, Tyr-364, Tyr-429, and Tyr-433.

Belongs to the tryptophan dimethylallyltransferase family.

The protein operates within secondary metabolite biosynthesis. Functionally, prenyltransferase; part of the gene cluster that mediates the biosynthesis of the benzazepine alkaloid nanangelenin A which contains an unprecedented 3,4-dihydro-1-benzazepine-2,5-dione-N-prenyl-N-acetoxy-anthranilamide scaffold. The first step of nanangelenin biosynthesis is catalyzed by the indoleamine 2,3-dioxygenase nanC which produces N-formyl-kynurenine through the catabolism of tryptophan. The two-module NRPS nanA then utilizes anthranilate (Ant) and L-kynurenine (L-Kyn) to assemble the dipeptide product nanangelenin B. The first adenylation domain of nanA (A1) loads anthranilate onto the T1 domain, while A2 loads kynurenine, generated through spontaneous nonenzymatic deformylation of the nanC-supplied N-formyl-kynurenine. The peptide bond formation between the tethered amino acids is catalyzed by the first condensation domain (C1) between anthranilate's carbonyl carbon and kynurenine's aliphatic primary amine. The second C domain (C2) catalyzes the final cyclization event between the aromatic amine of kynurenine and the tethered carbonyl carbon, yielding nanangelenin B. The terminal T3 domain enhances the catalytic efficiency of C2, suggesting the T2-tethered Ant-L-Kyn is transferred to T3 prior to cyclization by C2. Once released from nanA, nanangelenin B is then prenylated by the prenyltransferase nanD to form nanangelenin C. Nanangelenin C is then N-hydroxylated by the FAD-dependent monooxygenase nanF and further acetylated by the acetyltransferase nanB to yield nanangelenin F. Finally, the N-methyltransferase nanE methylates the amide nitrogen of 1-benzazepine to convert nanangelenin F into nanangelenin A. NanE is also able to methylate most of the intermediates of the pathway such as nanangelenin B and nanangelenin C to produce nanangelenin D and nanangelenin E, respectively. In Aspergillus nanangensis, this protein is Prenyltransferase nanD.